The chain runs to 140 residues: Nucleoside diphosphate kinase (140 aa).

Residues lysine 11, phenylalanine 59, arginine 87, threonine 93, arginine 104, and asparagine 114 each contribute to the ATP site. Catalysis depends on histidine 117, which acts as the Pros-phosphohistidine intermediate.

It belongs to the NDK family. In terms of assembly, homotetramer. Requires Mg(2+) as cofactor.

It is found in the cytoplasm. It carries out the reaction a 2'-deoxyribonucleoside 5'-diphosphate + ATP = a 2'-deoxyribonucleoside 5'-triphosphate + ADP. The enzyme catalyses a ribonucleoside 5'-diphosphate + ATP = a ribonucleoside 5'-triphosphate + ADP. In terms of biological role, major role in the synthesis of nucleoside triphosphates other than ATP. The ATP gamma phosphate is transferred to the NDP beta phosphate via a ping-pong mechanism, using a phosphorylated active-site intermediate. This Rhodopseudomonas palustris (strain HaA2) protein is Nucleoside diphosphate kinase.